A 160-amino-acid polypeptide reads, in one-letter code: Transcription elongation factor GreA (160 aa).

The stretch at 49–75 (SEYDEAKNDQAFTEGKILQLENKLKNA) forms a coiled coil.

This sequence belongs to the GreA/GreB family.

In terms of biological role, necessary for efficient RNA polymerase transcription elongation past template-encoded arresting sites. The arresting sites in DNA have the property of trapping a certain fraction of elongating RNA polymerases that pass through, resulting in locked ternary complexes. Cleavage of the nascent transcript by cleavage factors such as GreA or GreB allows the resumption of elongation from the new 3'terminus. GreA releases sequences of 2 to 3 nucleotides. The sequence is that of Transcription elongation factor GreA from Clostridium botulinum (strain Eklund 17B / Type B).